The sequence spans 248 residues: PACRG-like protein (248 aa).

Met-1 carries the N-acetylmethionine modification. The segment covering 1–29 has biased composition (polar residues); that stretch reads MQKSEGSGGTQLKNRATGNYDQRTSSSTQ. The interval 1 to 71 is disordered; it reads MQKSEGSGGT…LNPKTINPFG (71 aa). Residues 39 to 49 are compositionally biased toward low complexity; it reads SKSSLSTSSPE. The residue at position 47 (Ser-47) is a Phosphoserine.

This Homo sapiens (Human) protein is PACRG-like protein (PACRGL).